Here is a 430-residue protein sequence, read N- to C-terminus: MMMENSGSLWDAARQFFPGGVNSPVRAFRAVGEEPVVAVRGEGAYLIDADGRRFLDYICSWGALLAGHAHPHVVDRLSEAIQRGTSFGLLSPYEVELARAIVASVPAIELVRFVNSGTEATMSAIRLARAVTGRNLVVKFAGCYHGHVDGLLVAAGSGVLTFGLPGTPGVTEGTARDTLVLPYNDQEAVEDAFAQHGERIAAVIVEPVAGNMGVVPPAAGFLSRLRELTRQAGALLIFDEVITGFRLGLGGAQERFGILPDLTCLGKVIGGGLPVGAYGGRRDLMEQVAPNGPVYQAGTLAGNPLSMVAGLATLELAREPGVYGRLETLAAWLQRGLEETIQESGLPAHVQRVGSMLTLFFSQQPVTDAQTAERCDTARFAAFHRAMRAQGILLPPSQFEAWFVSLAHREEDIDRTIEAARKALAEVARG.

The residue at position 267 (lysine 267) is an N6-(pyridoxal phosphate)lysine.

Belongs to the class-III pyridoxal-phosphate-dependent aminotransferase family. HemL subfamily. Homodimer. Requires pyridoxal 5'-phosphate as cofactor.

It is found in the cytoplasm. It catalyses the reaction (S)-4-amino-5-oxopentanoate = 5-aminolevulinate. It functions in the pathway porphyrin-containing compound metabolism; protoporphyrin-IX biosynthesis; 5-aminolevulinate from L-glutamyl-tRNA(Glu): step 2/2. The chain is Glutamate-1-semialdehyde 2,1-aminomutase from Thermomicrobium roseum (strain ATCC 27502 / DSM 5159 / P-2).